Reading from the N-terminus, the 128-residue chain is Large ribosomal subunit protein bL12 (128 aa).

This sequence belongs to the bacterial ribosomal protein bL12 family. As to quaternary structure, homodimer. Part of the ribosomal stalk of the 50S ribosomal subunit. Forms a multimeric L10(L12)X complex, where L10 forms an elongated spine to which 2 to 4 L12 dimers bind in a sequential fashion. Binds GTP-bound translation factors.

In terms of biological role, forms part of the ribosomal stalk which helps the ribosome interact with GTP-bound translation factors. Is thus essential for accurate translation. This is Large ribosomal subunit protein bL12 from Picosynechococcus sp. (strain ATCC 27264 / PCC 7002 / PR-6) (Agmenellum quadruplicatum).